A 317-amino-acid polypeptide reads, in one-letter code: Putative 2-hydroxyacid dehydrogenase SAB2178 (317 aa).

NAD(+) is bound by residues 155 to 156 (EI), 234 to 236 (ASR), and Asp260. Arg236 is an active-site residue. The active site involves Glu265. His283 functions as the Proton donor in the catalytic mechanism. NAD(+) is bound at residue 283–286 (HIGN).

Belongs to the D-isomer specific 2-hydroxyacid dehydrogenase family.

The sequence is that of Putative 2-hydroxyacid dehydrogenase SAB2178 from Staphylococcus aureus (strain bovine RF122 / ET3-1).